Here is a 364-residue protein sequence, read N- to C-terminus: Melatonin receptor type 1B (364 aa).

An N-terminal signal peptide occupies residues 1–28; it reads MPDNSSIANCCAASGLAARPSWPGSAEA. Topologically, residues 29 to 45 are extracellular; that stretch reads EPPETPRAPWVAPMLST. A helical membrane pass occupies residues 46–66; it reads VVIVTTAVDFVGNLLVILSVL. The Cytoplasmic portion of the chain corresponds to 67 to 81; it reads RNRKLRNAGNLFVVN. The chain crosses the membrane as a helical span at residues 82–102; that stretch reads LALADLVVALYPYPLILVAIL. The Extracellular segment spans residues 103–115; sequence HDGWVLGEIHCKA. Cys113 and Cys190 are joined by a disulfide. The chain crosses the membrane as a helical span at residues 116 to 136; it reads SAFVMGLSVIGSVFNITAIAI. Residues 137-158 lie on the Cytoplasmic side of the membrane; the sequence is NRYWCICHSATYHRACSQWHAP. Residues 159 to 179 form a helical membrane-spanning segment; it reads LYISLIWLLTLVALVPNFFVG. The Extracellular segment spans residues 180-200; that stretch reads SLEYDPRIYSCTFIQTASTQY. Residues 201–221 traverse the membrane as a helical segment; sequence TMAVVAIHFLLPIAVVSFCYL. Residues 222–255 lie on the Cytoplasmic side of the membrane; the sequence is RIWILVLQARRKAKAERKLRLRPSDLRSFLTMFA. The chain crosses the membrane as a helical span at residues 256 to 276; sequence VFVVFAICWAPLNCIGLAVAI. Residues 277–287 lie on the Extracellular side of the membrane; sequence NPEAMALQIPE. A helical transmembrane segment spans residues 288 to 308; it reads GLFVTSYFLAYFNSCLNAIVY. The Cytoplasmic segment spans residues 309 to 364; it reads GLLNQNFRREYKRILSALWSTGRCFHDASKCHLTEDLQGPVPPAAMATIPVQEGAL.

It belongs to the G-protein coupled receptor 1 family. As to expression, expressed in the hippocampus, kidney, and ovary.

The protein localises to the cell membrane. In terms of biological role, high affinity receptor for melatonin. The activity of this receptor is mediated by pertussis toxin sensitive G proteins that inhibits adenylate cyclase activity. This Rattus norvegicus (Rat) protein is Melatonin receptor type 1B.